The primary structure comprises 357 residues: Anthranilate phosphoribosyltransferase (357 aa).

5-phospho-alpha-D-ribose 1-diphosphate is bound by residues Gly-94, 97–98, Thr-102, 104–107, 122–130, and Gly-134; these read GD, NLST, and KHGNRAASS. Gly-94 contacts anthranilate. Ser-106 lines the Mg(2+) pocket. An anthranilate-binding site is contributed by Asn-125. Arg-180 is an anthranilate binding site. Mg(2+) is bound by residues Asp-238 and Glu-239.

The protein belongs to the anthranilate phosphoribosyltransferase family. Homodimer. Mg(2+) is required as a cofactor.

The catalysed reaction is N-(5-phospho-beta-D-ribosyl)anthranilate + diphosphate = 5-phospho-alpha-D-ribose 1-diphosphate + anthranilate. It functions in the pathway amino-acid biosynthesis; L-tryptophan biosynthesis; L-tryptophan from chorismate: step 2/5. Catalyzes the transfer of the phosphoribosyl group of 5-phosphorylribose-1-pyrophosphate (PRPP) to anthranilate to yield N-(5'-phosphoribosyl)-anthranilate (PRA). This is Anthranilate phosphoribosyltransferase from Mycobacterium sp. (strain KMS).